Here is a 295-residue protein sequence, read N- to C-terminus: Protoheme IX farnesyltransferase (295 aa).

9 consecutive transmembrane segments (helical) span residues Val-8–Ala-28, Tyr-35–Phe-55, Val-74–Ile-94, Leu-98–Ile-118, Val-132–Ala-152, Leu-162–Phe-182, Ile-208–Ala-228, Leu-233–Ala-253, and Phe-264–Val-284.

This sequence belongs to the UbiA prenyltransferase family. Protoheme IX farnesyltransferase subfamily.

Its subcellular location is the cell inner membrane. The enzyme catalyses heme b + (2E,6E)-farnesyl diphosphate + H2O = Fe(II)-heme o + diphosphate. The protein operates within porphyrin-containing compound metabolism; heme O biosynthesis; heme O from protoheme: step 1/1. Its function is as follows. Converts heme B (protoheme IX) to heme O by substitution of the vinyl group on carbon 2 of heme B porphyrin ring with a hydroxyethyl farnesyl side group. This chain is Protoheme IX farnesyltransferase, found in Yersinia pseudotuberculosis serotype O:1b (strain IP 31758).